Reading from the N-terminus, the 880-residue chain is Potassium transport protein 2 (880 aa).

Asn9 carries N-linked (GlcNAc...) asparagine glycosylation. 2 helical membrane-spanning segments follow: residues 28–48 (FVQD…LYGS) and 84–104 (TILL…LTLF). The tract at residues 157–182 (MHRPVAPETKAEEAEHQENEKHHRHH) is disordered. The segment covering 165–177 (TKAEEAEHQENEK) has biased composition (basic and acidic residues). 7 N-linked (GlcNAc...) asparagine glycosylation sites follow: Asn239, Asn283, Asn293, Asn294, Asn321, Asn443, and Asn460. Polar residues predominate over residues 289–315 (HHLDNNSSISSHNPSLETANDGNQETV). Residues 289–344 (HHLDNNSSISSHNPSLETANDGNQETVSSSNSNYSTTRVDNDPHVASYSPQNSNFD) are disordered. Residues 316–325 (SSSNSNYSTT) show a composition bias toward low complexity. A run of 6 helical transmembrane segments spans residues 494–514 (ILVV…LIFI), 571–591 (LIFL…WIMI), 625–645 (WVLF…FMVL), 684–704 (IAPA…YPIA), 756–776 (QLSH…IVEG), and 787–807 (FTLF…GLSL). A disordered region spans residues 857-880 (REEEDYMRRHGKKNTNRADPVPSS).

Belongs to the TrkH potassium transport family.

The protein resides in the cell membrane. In terms of biological role, together with TRK1, defines the major, high-affinity potassium influx transport system. Involved in maintenance of the proper sodium/potassium ratio in the cell and in regulating the plasma membrane potential. This chain is Potassium transport protein 2 (trk2), found in Schizosaccharomyces pombe (strain 972 / ATCC 24843) (Fission yeast).